A 182-amino-acid polypeptide reads, in one-letter code: Large ribosomal subunit protein uL5 (182 aa).

It belongs to the universal ribosomal protein uL5 family. In terms of assembly, part of the 50S ribosomal subunit; part of the 5S rRNA/L5/L18/L25 subcomplex. Contacts the 5S rRNA and the P site tRNA. Forms a bridge to the 30S subunit in the 70S ribosome.

In terms of biological role, this is one of the proteins that bind and probably mediate the attachment of the 5S RNA into the large ribosomal subunit, where it forms part of the central protuberance. In the 70S ribosome it contacts protein S13 of the 30S subunit (bridge B1b), connecting the 2 subunits; this bridge is implicated in subunit movement. Contacts the P site tRNA; the 5S rRNA and some of its associated proteins might help stabilize positioning of ribosome-bound tRNAs. The sequence is that of Large ribosomal subunit protein uL5 from Mycoplasma mobile (strain ATCC 43663 / 163K / NCTC 11711) (Mesomycoplasma mobile).